The sequence spans 316 residues: Ribose-phosphate pyrophosphokinase (316 aa).

Residues 40–42 (DGE) and 99–100 (RQ) contribute to the ATP site. Residues histidine 133 and aspartate 174 each contribute to the Mg(2+) site. The active site involves lysine 197. D-ribose 5-phosphate-binding positions include arginine 199, aspartate 223, and 227 to 231 (DTAGT).

This sequence belongs to the ribose-phosphate pyrophosphokinase family. Class I subfamily. Homohexamer. It depends on Mg(2+) as a cofactor.

Its subcellular location is the cytoplasm. The enzyme catalyses D-ribose 5-phosphate + ATP = 5-phospho-alpha-D-ribose 1-diphosphate + AMP + H(+). The protein operates within metabolic intermediate biosynthesis; 5-phospho-alpha-D-ribose 1-diphosphate biosynthesis; 5-phospho-alpha-D-ribose 1-diphosphate from D-ribose 5-phosphate (route I): step 1/1. Its function is as follows. Involved in the biosynthesis of the central metabolite phospho-alpha-D-ribosyl-1-pyrophosphate (PRPP) via the transfer of pyrophosphoryl group from ATP to 1-hydroxyl of ribose-5-phosphate (Rib-5-P). This is Ribose-phosphate pyrophosphokinase from Fusobacterium nucleatum subsp. nucleatum (strain ATCC 25586 / DSM 15643 / BCRC 10681 / CIP 101130 / JCM 8532 / KCTC 2640 / LMG 13131 / VPI 4355).